The chain runs to 137 residues: Putative pre-16S rRNA nuclease (137 aa).

It belongs to the YqgF nuclease family.

It is found in the cytoplasm. In terms of biological role, could be a nuclease involved in processing of the 5'-end of pre-16S rRNA. This is Putative pre-16S rRNA nuclease from Buchnera aphidicola subsp. Schizaphis graminum (strain Sg).